A 745-amino-acid polypeptide reads, in one-letter code: Cytoplasmic polyadenylation element-binding protein 3 (745 aa).

Disordered stretches follow at residues 1–45, 94–180, and 204–283; these read MNLN…KSPT, VGSK…TNNS, and NKAN…FGEL. The segment covering 162–175 has biased composition (basic and acidic residues); that stretch reads LNFERDAEQKKDST. The segment covering 219–229 has biased composition (polar residues); the sequence is ETPTDSPQKGF. Low complexity predominate over residues 230 to 240; it reads SSSTESSPSDS. Residues 241-255 are compositionally biased toward polar residues; that stretch reads MNQFPSREHFTSANE. Over residues 264 to 276 the composition is skewed to basic and acidic residues; that stretch reads FQQEHGNKNRDSD. The RRM domain occupies 297–319; the sequence is IFVGGVPWDITEAALKDSFGEFG.

Cytoplasmic polyadenylation element binding protein that binds to and regulates the translation of specific mRNAs. May not be required for oogenesis. This chain is Cytoplasmic polyadenylation element-binding protein 3 (cpb-3), found in Caenorhabditis elegans.